The primary structure comprises 430 residues: Adenylosuccinate synthetase (430 aa).

GTP contacts are provided by residues Gly13–Lys19 and Gly41–Thr43. The Proton acceptor role is filled by Asp14. Mg(2+) is bound by residues Asp14 and Gly41. IMP contacts are provided by residues Asp14 to Lys17, Asn39 to His42, Thr130, Arg144, Gln225, Thr240, and Arg304. The active-site Proton donor is the His42. Substrate is bound at residue Ala300–Arg306. Residues Arg306, Lys332 to Asp334, and Ser414 to Gly416 each bind GTP.

It belongs to the adenylosuccinate synthetase family. In terms of assembly, homodimer. Requires Mg(2+) as cofactor.

The protein localises to the cytoplasm. The enzyme catalyses IMP + L-aspartate + GTP = N(6)-(1,2-dicarboxyethyl)-AMP + GDP + phosphate + 2 H(+). It functions in the pathway purine metabolism; AMP biosynthesis via de novo pathway; AMP from IMP: step 1/2. In terms of biological role, plays an important role in the de novo pathway of purine nucleotide biosynthesis. Catalyzes the first committed step in the biosynthesis of AMP from IMP. The sequence is that of Adenylosuccinate synthetase from Xanthomonas oryzae pv. oryzae (strain MAFF 311018).